Consider the following 163-residue polypeptide: NADH-quinone oxidoreductase subunit I (163 aa).

2 consecutive 4Fe-4S ferredoxin-type domains span residues 54–84 (LRRYPNGEERCIACKLCEAVCPALAITIDSA) and 94–123 (TRYDIDLFKCIFCGFCEESCPVDSIVETHI). Residues Cys64, Cys67, Cys70, Cys74, Cys103, Cys106, Cys109, and Cys113 each contribute to the [4Fe-4S] cluster site.

The protein belongs to the complex I 23 kDa subunit family. In terms of assembly, NDH-1 is composed of 14 different subunits. Subunits NuoA, H, J, K, L, M, N constitute the membrane sector of the complex. Requires [4Fe-4S] cluster as cofactor.

It localises to the cell inner membrane. The catalysed reaction is a quinone + NADH + 5 H(+)(in) = a quinol + NAD(+) + 4 H(+)(out). Functionally, NDH-1 shuttles electrons from NADH, via FMN and iron-sulfur (Fe-S) centers, to quinones in the respiratory chain. The immediate electron acceptor for the enzyme in this species is believed to be ubiquinone. Couples the redox reaction to proton translocation (for every two electrons transferred, four hydrogen ions are translocated across the cytoplasmic membrane), and thus conserves the redox energy in a proton gradient. The protein is NADH-quinone oxidoreductase subunit I of Xylella fastidiosa (strain 9a5c).